Consider the following 270-residue polypeptide: Small ribosomal subunit protein uS2 (270 aa).

Belongs to the universal ribosomal protein uS2 family. In terms of assembly, component of the small ribosomal subunit. Mature ribosomes consist of a small (40S) and a large (60S) subunit. The 40S subunit contains about 33 different proteins and 1 molecule of RNA (18S). The 60S subunit contains about 49 different proteins and 3 molecules of RNA (28S, 5.8S and 5S). Interacts with oho23B/rpS21.

It is found in the cytoplasm. Its subcellular location is the nucleus. Functionally, required for the assembly and/or stability of the 40S ribosomal subunit. Required for the processing of the 20S rRNA-precursor to mature 18S rRNA in a late step of the maturation of 40S ribosomal subunits. Required during oogenesis and imaginal development. The chain is Small ribosomal subunit protein uS2 from Drosophila persimilis (Fruit fly).